We begin with the raw amino-acid sequence, 153 residues long: Ribonuclease H (153 aa).

Residues 1–142 (MLKTIKIFSD…CDHLARESAK (142 aa)) enclose the RNase H type-1 domain. The Mg(2+) site is built by Asp10, Glu48, Asp70, and Asp134.

The protein belongs to the RNase H family. In terms of assembly, monomer. Requires Mg(2+) as cofactor.

The protein resides in the cytoplasm. The catalysed reaction is Endonucleolytic cleavage to 5'-phosphomonoester.. In terms of biological role, endonuclease that specifically degrades the RNA of RNA-DNA hybrids. This Buchnera aphidicola subsp. Baizongia pistaciae (strain Bp) protein is Ribonuclease H.